A 391-amino-acid polypeptide reads, in one-letter code: Phosphoglycerate kinase (391 aa).

Residues 21-23 (DLN), arginine 36, 59-62 (HLGR), arginine 113, and arginine 146 contribute to the substrate site. Residues lysine 197, glutamate 319, and 345-348 (GGDT) each bind ATP.

The protein belongs to the phosphoglycerate kinase family. As to quaternary structure, monomer.

It is found in the cytoplasm. The catalysed reaction is (2R)-3-phosphoglycerate + ATP = (2R)-3-phospho-glyceroyl phosphate + ADP. It functions in the pathway carbohydrate degradation; glycolysis; pyruvate from D-glyceraldehyde 3-phosphate: step 2/5. The protein is Phosphoglycerate kinase of Xanthomonas oryzae pv. oryzae (strain MAFF 311018).